The sequence spans 302 residues: Probable alpha-L-glutamate ligase (302 aa).

Positions 104–287 (LQLLSRKGLG…IAGQIIEYIE (184 aa)) constitute an ATP-grasp domain. ATP-binding positions include Lys141, 178–179 (EY), Asp187, and 211–213 (RSN). Asp248, Glu260, and Asn262 together coordinate Mg(2+). Asp248, Glu260, and Asn262 together coordinate Mn(2+).

Belongs to the RimK family. Requires Mg(2+) as cofactor. Mn(2+) is required as a cofactor.

This chain is Probable alpha-L-glutamate ligase, found in Chromohalobacter salexigens (strain ATCC BAA-138 / DSM 3043 / CIP 106854 / NCIMB 13768 / 1H11).